The sequence spans 141 residues: Large ribosomal subunit protein uL11 (141 aa).

The protein belongs to the universal ribosomal protein uL11 family. Part of the ribosomal stalk of the 50S ribosomal subunit. Interacts with L10 and the large rRNA to form the base of the stalk. L10 forms an elongated spine to which L12 dimers bind in a sequential fashion forming a multimeric L10(L12)X complex. One or more lysine residues are methylated.

Functionally, forms part of the ribosomal stalk which helps the ribosome interact with GTP-bound translation factors. This is Large ribosomal subunit protein uL11 from Helicobacter hepaticus (strain ATCC 51449 / 3B1).